A 430-amino-acid polypeptide reads, in one-letter code: RPM1 interacting protein 13 (430 aa).

The disordered stretch occupies residues Met1–Thr21. The tract at residues Arg231–Ser300 is nuclear localization.

Interacts with RPM1 (via its NB-ARC domain). Binds to ARF1 in the nucleus.

The protein resides in the nucleus. Resistance protein interactor which positively enhances RPM1-mediated resistance to necrotrophic bacterial pathogens Pseudomonas syringae pv. tomato DC3000 harboring type III effector protein AvrRpm1 or AvrB, but prevents the hypersensitive response (HR) controlled by RPM1. Together with ARF1, promotes leaf senescence and cell death, probably by facilitating the translocation of ARF1 into the nucleus, and activates ROS-related enzymes (e.g. POD, CAT and SOD). The chain is RPM1 interacting protein 13 from Arabidopsis thaliana (Mouse-ear cress).